The chain runs to 302 residues: Melibiose operon regulatory protein (302 aa).

An HTH araC/xylS-type domain is found at 194–292 (SQMLGFIAEN…GMSPQQYRKL (99 aa)). 2 DNA-binding regions (H-T-H motif) span residues 211 to 232 (NDVAEHVKLNANYAMGIFQRVM) and 259 to 282 (ILDIALTAGFRSSSRFYSTFGKYV).

Functionally, transcription activator for the expression of the melAB operon. MelR binds at two sites located upstream of the melAB transcription site. This is Melibiose operon regulatory protein (melR) from Escherichia coli O6:H1 (strain CFT073 / ATCC 700928 / UPEC).